The sequence spans 97 residues: Protein RnfH (97 aa).

Belongs to the UPF0125 (RnfH) family.

The protein is Protein RnfH of Aliivibrio salmonicida (strain LFI1238) (Vibrio salmonicida (strain LFI1238)).